Here is a 416-residue protein sequence, read N- to C-terminus: Glutamyl-tRNA reductase (416 aa).

Residues 49–52, S105, 110–112, and Q116 contribute to the substrate site; these read TCNR and EPQ. Catalysis depends on C50, which acts as the Nucleophile. Residue 185-190 coordinates NADP(+); the sequence is GAGETI.

It belongs to the glutamyl-tRNA reductase family. As to quaternary structure, homodimer.

The catalysed reaction is (S)-4-amino-5-oxopentanoate + tRNA(Glu) + NADP(+) = L-glutamyl-tRNA(Glu) + NADPH + H(+). It functions in the pathway porphyrin-containing compound metabolism; protoporphyrin-IX biosynthesis; 5-aminolevulinate from L-glutamyl-tRNA(Glu): step 1/2. Functionally, catalyzes the NADPH-dependent reduction of glutamyl-tRNA(Glu) to glutamate 1-semialdehyde (GSA). The polypeptide is Glutamyl-tRNA reductase (Shewanella sediminis (strain HAW-EB3)).